The primary structure comprises 328 residues: Phospholipid scramblase 1 (328 aa).

The segment at 1 to 93 (MENHSKQTEA…NHPGGPGGTP (93 aa)) is proline-rich domain (PRD). The segment at 1–96 (MENHSKQTEA…GGPGGTPWMP (96 aa)) is disordered. Residues 1-297 (MENHSKQTEA…IQFPLDLDVK (297 aa)) lie on the Cytoplasmic side of the membrane. Positions 18–26 (PAGYPPPYP) match the SH3-binding 1 motif. Positions 22 to 25 (PPPY) match the PPxY motif motif. Low complexity predominate over residues 28-47 (AAFQGPSDHAAYPIPQAGYQ). The segment covering 49–64 (PPGPYPGPQPGYPVPP) has biased composition (pro residues). An SH3-binding 2 motif is present at residues 56-64 (PQPGYPVPP). Tyr83 carries the phosphotyrosine; by ABL modification. Residues 93 to 101 (PWMPAPPPP) carry the SH3-binding 3 motif. Phosphothreonine; by PKC/PRKCD is present on Thr170. 4 S-palmitoyl cysteine lipidation sites follow: Cys193, Cys194, Cys197, and Cys198. Residues 269-275 (SKQWSGF) carry the Nuclear localization signal motif. A helical membrane pass occupies residues 298 to 314 (MKAVMLGACFLIDFMFF). The Extracellular segment spans residues 315-328 (ERTGNEEQRSGAWQ).

Belongs to the phospholipid scramblase family. Forms homooligomers in the presence of calcium. Interacts with ABL. Interacts with RELT, RELL1 and RELL2. Interacts with OXSR1 in the presence of RELT. Interacts with OCLN, TOP2A and TOP2B. Interacts with TRPC1, TRPC4 and TRPC5. Interacts with ILDR1. Ca(2+) is required as a cofactor. It depends on Mg(2+) as a cofactor. The cofactor is Zn(2+). Post-translationally, phosphorylation at Thr-170 by PKC/PKCD increases its phospholipid scramblase activity during both cell stimulation and apoptosis. Phosphorylated by OXSR1 in the presence of RELT. Palmitoylation is required for its phospholipid scramblase activity. Palmitoylation regulates its localization to the cell membrane or the nucleus; trafficking to the cell membrane is dependent upon palmitoylation whereas in the absence of palmitoylation, localizes to the nucleus. As to expression, highly expressed in kidney, lung, liver and bone marrow, slightly in spleen, heart and macrophage.

The protein localises to the cell membrane. Its subcellular location is the nucleus. It localises to the cytoplasm. It is found in the perinuclear region. The catalysed reaction is a 1,2-diacyl-sn-glycero-3-phosphocholine(in) = a 1,2-diacyl-sn-glycero-3-phosphocholine(out). It carries out the reaction a 1,2-diacyl-sn-glycero-3-phosphoethanolamine(in) = a 1,2-diacyl-sn-glycero-3-phosphoethanolamine(out). The enzyme catalyses a 1,2-diacyl-sn-glycero-3-phospho-L-serine(in) = a 1,2-diacyl-sn-glycero-3-phospho-L-serine(out). Its function is as follows. Catalyzes calcium-induced ATP-independent rapid bidirectional and non-specific distribution of phospholipids (lipid scrambling or lipid flip-flop) between the inner and outer leaflet of the plasma membrane resulting in collapse of the phospholipid asymmetry which leads to phosphatidylserine externalization on the cell surface. Mediates calcium-dependent phosphatidylserine externalization and apoptosis in neurons via its association with TRPC5. Also exhibits magnesium-dependent nuclease activity against double-stranded DNA and RNA but not single-stranded DNA and can enhance DNA decatenation mediated by TOP2A. Negatively regulates FcR-mediated phagocytosis in differentiated macrophages. May contribute to cytokine-regulated cell proliferation and differentiation. This is Phospholipid scramblase 1 (Plscr1) from Mus musculus (Mouse).